Reading from the N-terminus, the 496-residue chain is Lysine--tRNA ligase (496 aa).

Glu409 and Glu416 together coordinate Mg(2+).

The protein belongs to the class-II aminoacyl-tRNA synthetase family. In terms of assembly, homodimer. The cofactor is Mg(2+).

The protein localises to the cytoplasm. The enzyme catalyses tRNA(Lys) + L-lysine + ATP = L-lysyl-tRNA(Lys) + AMP + diphosphate. The polypeptide is Lysine--tRNA ligase (Streptococcus suis (strain 05ZYH33)).